Reading from the N-terminus, the 473-residue chain is MNYLPIFIDLKSKNVLVIGAGEVGLNKIRILLRAKAKVNVIAKELCSEVKLLLRDQKINWLSKNFDLIYLNKIFLVVSATNDIKLNQYIFKKCNERCVLVNIVDDKLKCSFIFPSIIDRSPLIVAISSGGTAPVLLRLLREKIEAILPNKLGDVAKIAGKWRLAIKKHFSNFLERRKFWEKLFHSIFVEHILNGNKEQAINVLKKNMNQNISLTGEIILVGAGPGDSGLLTLRGLQVLQQADVVLYDYLVSEDILDLIRRDAKRICVGKRVGLKNITQNEIIKLLIFFAQKGKKVVRLKGGDPFIFGRGSEEIEAAKDAGIHFQVVPGITSAIGIAAYTGIPLTHRKYSQGVIFITGHKCIDGFLNNWSILSDPSYTLVVYMGTLKAVYIAQKLITFGRSKLTPIAIIVQGTTIHQKVIVGCLGEIEKIIPFAATPSLLIIGDVVHLHKKLAWFQSENILKKIKNKFSTLTFI.

Positions 1–203 (MNYLPIFIDL…GNKEQAINVL (203 aa)) are precorrin-2 dehydrogenase /sirohydrochlorin ferrochelatase. NAD(+) contacts are provided by residues 22–23 (EV) and 43–44 (KE). S128 carries the post-translational modification Phosphoserine. Positions 215 to 473 (GEIILVGAGP…KNKFSTLTFI (259 aa)) are uroporphyrinogen-III C-methyltransferase. P224 contributes to the S-adenosyl-L-methionine binding site. Catalysis depends on D247, which acts as the Proton acceptor. K269 functions as the Proton donor in the catalytic mechanism. S-adenosyl-L-methionine contacts are provided by residues 300–302 (GGD), I305, M382, and G411.

It in the N-terminal section; belongs to the precorrin-2 dehydrogenase / sirohydrochlorin ferrochelatase family. This sequence in the C-terminal section; belongs to the precorrin methyltransferase family.

The catalysed reaction is uroporphyrinogen III + 2 S-adenosyl-L-methionine = precorrin-2 + 2 S-adenosyl-L-homocysteine + H(+). It catalyses the reaction precorrin-2 + NAD(+) = sirohydrochlorin + NADH + 2 H(+). It carries out the reaction siroheme + 2 H(+) = sirohydrochlorin + Fe(2+). Its pathway is cofactor biosynthesis; adenosylcobalamin biosynthesis; precorrin-2 from uroporphyrinogen III: step 1/1. It participates in cofactor biosynthesis; adenosylcobalamin biosynthesis; sirohydrochlorin from precorrin-2: step 1/1. The protein operates within porphyrin-containing compound metabolism; siroheme biosynthesis; precorrin-2 from uroporphyrinogen III: step 1/1. It functions in the pathway porphyrin-containing compound metabolism; siroheme biosynthesis; siroheme from sirohydrochlorin: step 1/1. Its pathway is porphyrin-containing compound metabolism; siroheme biosynthesis; sirohydrochlorin from precorrin-2: step 1/1. Functionally, multifunctional enzyme that catalyzes the SAM-dependent methylations of uroporphyrinogen III at position C-2 and C-7 to form precorrin-2 via precorrin-1. Then it catalyzes the NAD-dependent ring dehydrogenation of precorrin-2 to yield sirohydrochlorin. Finally, it catalyzes the ferrochelation of sirohydrochlorin to yield siroheme. This is Siroheme synthase from Buchnera aphidicola subsp. Acyrthosiphon pisum (strain APS) (Acyrthosiphon pisum symbiotic bacterium).